A 596-amino-acid chain; its full sequence is Arginine--tRNA ligase (596 aa).

The 'HIGH' region motif lies at 127–137 (ANPTGPVHVGR).

It belongs to the class-I aminoacyl-tRNA synthetase family.

The protein resides in the cytoplasm. It catalyses the reaction tRNA(Arg) + L-arginine + ATP = L-arginyl-tRNA(Arg) + AMP + diphosphate. This Haloquadratum walsbyi (strain DSM 16790 / HBSQ001) protein is Arginine--tRNA ligase.